A 117-amino-acid polypeptide reads, in one-letter code: Large ribosomal subunit protein bL20 (117 aa).

Belongs to the bacterial ribosomal protein bL20 family.

Binds directly to 23S ribosomal RNA and is necessary for the in vitro assembly process of the 50S ribosomal subunit. It is not involved in the protein synthesizing functions of that subunit. This chain is Large ribosomal subunit protein bL20, found in Glaesserella parasuis serovar 5 (strain SH0165) (Haemophilus parasuis).